Reading from the N-terminus, the 461-residue chain is Argininosuccinate lyase (461 aa).

Belongs to the lyase 1 family. Argininosuccinate lyase subfamily.

The protein localises to the cytoplasm. The catalysed reaction is 2-(N(omega)-L-arginino)succinate = fumarate + L-arginine. The protein operates within amino-acid biosynthesis; L-arginine biosynthesis; L-arginine from L-ornithine and carbamoyl phosphate: step 3/3. Its activity is regulated as follows. Strongly inhibited by L-arginine. Inhibitory effects are lowered at pH 7.0 compared to those at pH 8.0. At 42 degrees Celsius and pH 8.0, activity decreases to 77% and 25% in the presence of 1 mM and 10 mM arginine, respectively. The other amino and organic acids do not affect activity. Catalyzes the last step of arginine biosynthesis, the conversion of argininosuccinate into L-arginine and fumarate. This is Argininosuccinate lyase from Nostoc sp. (strain PCC 7120 / SAG 25.82 / UTEX 2576).